A 908-amino-acid chain; its full sequence is MGKHDKKTGKGRLDKFYRLAKEQGYRARSAFKLVHLNRKYDLLSKARCCIDLCAAPGGWLQVAEKYMPKGSLIIGVDLNAIKPLPHVTTFVADITTPHCRQTLRQHMHDWKADLVLHDGAPNVGSAWVQDAFTQNELVLQSLKLATEFLAKGGSFVTKVFRSQDYNSLLWVFGQLFKSVEATKPPSSRNVSAEIFVVCRDFIAPKHIDPKFLDPKHVFKDIASLPTSITEPTDTSIAPTSSSTASAAAAAARLAANSHAHSNVYAPEKKRRHREGYAEGDYTLHHTASAEEFVRGQDPVLLLGNMNKIEFRNETEKGWLKSRHTTPDIIANFEDLKVLGKGDFKALMKWRLAIRLEIGLDVKADKTQDATEEVVVEPMDEEEQITEELQKLQQAKLAKTKRERKRANEKKARELLKLQLNMTVPDDLDQNDLALQGEEEIFDLEEGENEARRRGKNGGLATLVDDGEGMDLASESEEEEDEDEEDDEVLDSDEERERKTAALEGELDGLYDSYVERKKERDAKWKVKQDRLKDKNFDAWHGIQEKSDEEGSDDDDGQDDDEEGGWDVIAQKKAKYGEGDSSDSDSDAEPETEVPKKIKKVSFEKPARSEKSSGLMTSLREPELRAQRSKQAQLWFDQPVFKEVGDLAALDGDDEEEEEEDESEEEESDDEDVDMEDASESSSTLEGDDDFEIVPQAPEDDGPEWDVDDEDQDEVKKKVIQDKGLLTAEAVSLATALVNRKTTADKLIDQGFNRLSAHNKDGLPTWFLDDESQFYKPNIPITKEAVDALRARQRALDARPIKKVAEAKGRKKMKAVARMEKAKKKADGVMESEEMGDGEKARQVRRMLARAAKGKEKAKEKKIVVAKGVNKGVKGRPTGVKGKYKIVDARMRKEVRALKRIKKAGSKRR.

5 residues coordinate S-adenosyl-L-methionine: G57, W59, D77, D93, and D118. The Proton acceptor role is filled by K158. Residues 378–422 (MDEEEQITEELQKLQQAKLAKTKRERKRANEKKARELLKLQLNMT) are a coiled coil. Disordered regions lie at residues 440-513 (IFDL…YDSY), 535-715 (NFDA…DEVK), and 806-841 (AKGRKKMKAVARMEKAKKKADGVMESEEMGDGEKAR). Residues 464–493 (DDGEGMDLASESEEEEDEDEEDDEVLDSDE) are compositionally biased toward acidic residues. The segment covering 535-545 (NFDAWHGIQEK) has biased composition (basic and acidic residues). 2 stretches are compositionally biased toward acidic residues: residues 546 to 564 (SDEEGSDDDDGQDDDEEGG) and 579 to 591 (DSSDSDSDAEPET). The segment covering 592 to 610 (EVPKKIKKVSFEKPARSEK) has biased composition (basic and acidic residues). Acidic residues-rich tracts occupy residues 650-678 (DGDDEEEEEEDESEEEESDDEDVDMEDAS) and 685-712 (EGDDDFEIVPQAPEDDGPEWDVDDEDQD). Positions 816–827 (ARMEKAKKKADG) are enriched in basic and acidic residues.

The protein belongs to the class I-like SAM-binding methyltransferase superfamily. RNA methyltransferase RlmE family. SPB1 subfamily. As to quaternary structure, component of the nucleolar and nucleoplasmic pre-60S ribosomal particle.

Its subcellular location is the nucleus. It is found in the nucleolus. The enzyme catalyses a ribonucleotide in rRNA + S-adenosyl-L-methionine = a 2'-O-methylribonucleotide in rRNA + S-adenosyl-L-homocysteine + H(+). Its function is as follows. Required for proper assembly of pre-ribosomal particles during the biogenesis of the 60S ribosomal subunit. This is AdoMet-dependent rRNA methyltransferase SPB1 from Cryptococcus neoformans var. neoformans serotype D (strain B-3501A) (Filobasidiella neoformans).